Here is a 472-residue protein sequence, read N- to C-terminus: Excisase A (472 aa).

The 186-residue stretch at 244–429 (EILSGITKFE…FSLDMRKLAI (186 aa)) folds into the Tyr recombinase domain. Residues arginine 287, lysine 317, arginine 384, and histidine 407 contribute to the active site. Tyrosine 416 functions as the O-(3'-phospho-DNA)-tyrosine intermediate in the catalytic mechanism.

Belongs to the XisA/XisC recombinase family.

Its function is as follows. Essential for DNA excision. Site specific recombinase necessary for the excision of the 11 kb nifD element during heterocyst differentiation. This is Excisase A (xisA) from Nostoc sp. (strain PCC 7120 / SAG 25.82 / UTEX 2576).